The primary structure comprises 335 residues: Peroxidase 2 (335 aa).

The N-terminal stretch at 1 to 29 (MAAATAPKTMPSSVFAAALLLLAAAACQA) is a signal peptide. 4 disulfide bridges follow: Cys44-Cys125, Cys77-Cys82, Cys131-Cys329, and Cys212-Cys238. His75 acts as the Proton acceptor in catalysis. 5 residues coordinate Ca(2+): Asp76, Val79, Gly81, Asp83, and Ser85. N-linked (GlcNAc...) asparagine glycosylation is found at Asn166 and Asn180. Position 205 (His205) interacts with heme b. Residue Thr206 coordinates Ca(2+). A glycan (N-linked (GlcNAc...) asparagine) is linked at Asn241. Ca(2+) is bound by residues Asp253, Thr256, and Asp261.

It belongs to the peroxidase family. Classical plant (class III) peroxidase subfamily. Heme b serves as cofactor. Requires Ca(2+) as cofactor. Expressed in the elongating region of young roots, and in root vascular tissues and epidermis.

Its subcellular location is the secreted. It carries out the reaction 2 a phenolic donor + H2O2 = 2 a phenolic radical donor + 2 H2O. Functionally, removal of H(2)O(2), oxidation of toxic reductants, biosynthesis and degradation of lignin, suberization, auxin catabolism, response to environmental stresses such as wounding, pathogen attack and oxidative stress. These functions might be dependent on each isozyme/isoform in each plant tissue. The chain is Peroxidase 2 (PER2) from Zea mays (Maize).